Here is a 52-residue protein sequence, read N- to C-terminus: Lantibiotic epidermin (52 aa).

The propeptide occupies 1–30; it reads MEAVKEKNDLFNLDVKVNAKESNDSGAEPR. Positions 33–37 form a cross-link, lanthionine (Ser-Cys); it reads SKFIC. The segment at residues 38 to 41 is a cross-link (beta-methyllanthionine (Thr-Cys)); it reads TPGC. Thr-44 carries the (Z)-2,3-didehydrobutyrine modification. Residues 46–51 constitute a cross-link (lanthionine (Ser-Cys)); that stretch reads SFNSYC. The segment at residues 49 to 52 is a cross-link (S-(2-aminovinyl)-D-cysteine (Ser-Cys)); that stretch reads SYCC.

It belongs to the type A lantibiotic family. In terms of processing, maturation of lantibiotics involves the enzymatic conversion of Thr, and Ser into dehydrated AA and the formation of thioether bonds with cysteine. The C-terminal lanthionine undergoes decarboxylation. This is followed by membrane translocation and cleavage of the modified precursor. The 2,3-didehydrobutyrine is determined to be the Z-isomer.

Its function is as follows. Lanthionine-containing peptide antibiotic (lantibiotic) active on Gram-positive bacteria. The bactericidal activity of lantibiotics is based on depolarization of energized bacterial cytoplasmic membranes, initiated by the formation of aqueous transmembrane pores. The sequence is that of Lantibiotic epidermin (epiA) from Staphylococcus epidermidis.